A 657-amino-acid chain; its full sequence is Glycogen debranching enzyme (657 aa).

Asp336 functions as the Nucleophile in the catalytic mechanism. Glu371 serves as the catalytic Proton donor. The interval 460 to 479 (ANGEENRDGTNNNYSNNHGK) is disordered.

It belongs to the glycosyl hydrolase 13 family.

It carries out the reaction Hydrolysis of (1-&gt;6)-alpha-D-glucosidic linkages to branches with degrees of polymerization of three or four glucose residues in limit dextrin.. The protein operates within glycan degradation; glycogen degradation. Removes maltotriose and maltotetraose chains that are attached by 1,6-alpha-linkage to the limit dextrin main chain, generating a debranched limit dextrin. This Shigella dysenteriae serotype 1 (strain Sd197) protein is Glycogen debranching enzyme.